Consider the following 171-residue polypeptide: NADH-quinone oxidoreductase subunit I 1 (171 aa).

4Fe-4S ferredoxin-type domains follow at residues 41 to 71 (LSRDPDGEERCVACYLCAAACPVDCIALQAT) and 81 to 110 (EFFRINFSRCIFCGFCEEACPTDAIQLTPD). [4Fe-4S] cluster-binding residues include Cys-51, Cys-54, Cys-57, Cys-61, Cys-90, Cys-93, Cys-96, and Cys-100.

The protein belongs to the complex I 23 kDa subunit family. NDH-1 is composed of 14 different subunits. Subunits NuoA, H, J, K, L, M, N constitute the membrane sector of the complex. [4Fe-4S] cluster serves as cofactor.

The protein resides in the cell inner membrane. The catalysed reaction is a quinone + NADH + 5 H(+)(in) = a quinol + NAD(+) + 4 H(+)(out). Its function is as follows. NDH-1 shuttles electrons from NADH, via FMN and iron-sulfur (Fe-S) centers, to quinones in the respiratory chain. The immediate electron acceptor for the enzyme in this species is believed to be ubiquinone. Couples the redox reaction to proton translocation (for every two electrons transferred, four hydrogen ions are translocated across the cytoplasmic membrane), and thus conserves the redox energy in a proton gradient. This Nitrosospira multiformis (strain ATCC 25196 / NCIMB 11849 / C 71) protein is NADH-quinone oxidoreductase subunit I 1.